A 293-amino-acid polypeptide reads, in one-letter code: C-type lectin domain family 4 member G (293 aa).

Over 1 to 31 the chain is Cytoplasmic; that stretch reads MDTTRYSKWGGSSEEVPGGPWGRWVHWSRRP. At Ser12 the chain carries Phosphoserine. Residues 32–52 form a helical; Signal-anchor for type II membrane protein membrane-spanning segment; it reads LFLALAVLVTTVLWAVILSIL. Topologically, residues 53-293 are extracellular; sequence LSKASTERAA…GWICEKRHNC (241 aa). The N-linked (GlcNAc...) asparagine glycan is linked to Asn73. Positions 96 to 136 form a coiled coil; it reads SGTQAQLQTTRAELGEAQAKLMEQESALRELRERVTQGLAE. Asn159 is a glycosylation site (N-linked (GlcNAc...) asparagine). Positions 172–287 constitute a C-type lectin domain; it reads FEGSCYFFSV…CDSEKDGWIC (116 aa). Cys264 and Cys278 are joined by a disulfide.

As to quaternary structure, (Microbial infection) Interacts with Japanese encephalitis virus envelope protein E. In terms of assembly, (Microbial infection) Interacts with ebolavirus glycoprotein. (Microbial infection) Interacts with SARS-CoV spike glycoprotein. As to quaternary structure, (Microbial infection) Interacts with lassa virus and Lymphocytic choriomeningitis virus glycoprotein. As to expression, expressed exclusively in fetal and adult liver and in lymph nodes. Specifically expressed by endothelial cells lining lymph node and liver sinuses (at protein level).

The protein resides in the cell membrane. In terms of biological role, binds mannose, N-acetylglucosamine (GlcNAc) and fucose, but not galactose, in a Ca(2+)-dependent manner, in vitro. Functionally, (Microbial infection) Acts as a receptor for Japanese encephalitis virus. Its function is as follows. (Microbial infection) Acts as a receptor for Ebolavirus. (Microbial infection) Acts as a receptor for SARS-CoV. In terms of biological role, (Microbial infection) Acts as a receptor for Lassa virus and Lymphocytic choriomeningitis virus glycoprotein. The protein is C-type lectin domain family 4 member G (CLEC4G) of Homo sapiens (Human).